The primary structure comprises 335 residues: NAC domain-containing protein 40 (335 aa).

The NAC domain occupies 14 to 156; sequence LFPGFRFSPT…ALVVCRLRKN (143 aa). Residues 112-162 mediate DNA binding; that stretch reads VGTKRTLVFHIGRAPRGERTEWIMHEYCIHGAPQDALVVCRLRKNADFRAS. The span at 245–254 shows a compositional bias: polar residues; sequence PTNPTHQETI. The interval 245–267 is disordered; that stretch reads PTNPTHQETISSESSSKRSKCGI. Residues 313 to 333 form a helical membrane-spanning segment; that stretch reads VLATTVFLAILFSFFWTVLIA.

In terms of processing, proteolytically cleaved, probably by metalloprotease activity. This cleavage mediates a translocation from the plasma membrane to the nucleus. In terms of tissue distribution, expressed in seeds, leaves, roots and inflorescence. Expressed in roots, rosette leaves, cauline leaves, shoot apex, stems and flowers.

The protein resides in the cell membrane. Its subcellular location is the nucleus. In terms of biological role, transcriptional activator activated by proteolytic cleavage through regulated intramembrane proteolysis (RIP), probably via metalloprotease activity. Regulates gibberellic acid-mediated salt-responsive repression of seed germination and flowering via FT, thus delaying seed germination under high salinity conditions. The polypeptide is NAC domain-containing protein 40 (Arabidopsis thaliana (Mouse-ear cress)).